Reading from the N-terminus, the 213-residue chain is Na(+)-translocating NADH-quinone reductase subunit D (213 aa).

Transmembrane regions (helical) follow at residues 21–41 (PLIA…VNTA), 42–62 (ITMG…VSLL), 69–86 (SVRM…VIVI), 101–121 (LSVF…AESL), 131–151 (FLDG…VSIV), and 183–203 (FGLM…IWGV).

This sequence belongs to the NqrDE/RnfAE family. Composed of six subunits; NqrA, NqrB, NqrC, NqrD, NqrE and NqrF.

It is found in the cell inner membrane. It catalyses the reaction a ubiquinone + n Na(+)(in) + NADH + H(+) = a ubiquinol + n Na(+)(out) + NAD(+). In terms of biological role, NQR complex catalyzes the reduction of ubiquinone-1 to ubiquinol by two successive reactions, coupled with the transport of Na(+) ions from the cytoplasm to the periplasm. NqrA to NqrE are probably involved in the second step, the conversion of ubisemiquinone to ubiquinol. The chain is Na(+)-translocating NADH-quinone reductase subunit D from Chlamydia caviae (strain ATCC VR-813 / DSM 19441 / 03DC25 / GPIC) (Chlamydophila caviae).